A 446-amino-acid chain; its full sequence is Exodeoxyribonuclease 7 large subunit (446 aa).

This sequence belongs to the XseA family. Heterooligomer composed of large and small subunits.

It localises to the cytoplasm. The enzyme catalyses Exonucleolytic cleavage in either 5'- to 3'- or 3'- to 5'-direction to yield nucleoside 5'-phosphates.. Functionally, bidirectionally degrades single-stranded DNA into large acid-insoluble oligonucleotides, which are then degraded further into small acid-soluble oligonucleotides. This Acholeplasma laidlawii (strain PG-8A) protein is Exodeoxyribonuclease 7 large subunit.